The chain runs to 63 residues: Beta-defensin 3 (63 aa).

Positions 1-20 (MRIHYLLFAFLLVLLSPPAA) are cleaved as a signal peptide. A propeptide spanning residues 21–22 (FS) is cleaved from the precursor. Disulfide bonds link Cys-31–Cys-59, Cys-38–Cys-52, and Cys-42–Cys-60.

This sequence belongs to the beta-defensin family. LAP/TAP subfamily. As to expression, highest expression in salivary glands, epididymis, ovary and pancreas and to a lesser extent in lung, liver and brain. Low or no expression in skeletal muscle and tongue.

The protein localises to the secreted. Functionally, antimicrobial activity against Gram-negative bacteria E.coli and P.aeruginosa. The polypeptide is Beta-defensin 3 (Defb3) (Mus musculus (Mouse)).